Consider the following 480-residue polypeptide: Protein nucleotidyltransferase YdiU (480 aa).

ATP is bound by residues glycine 86, glycine 88, arginine 89, lysine 109, aspartate 121, glycine 122, arginine 172, and arginine 179. Aspartate 248 functions as the Proton acceptor in the catalytic mechanism. Residues asparagine 249 and aspartate 258 each contribute to the Mg(2+) site. Aspartate 258 is an ATP binding site.

The protein belongs to the SELO family. Mg(2+) serves as cofactor. It depends on Mn(2+) as a cofactor.

It catalyses the reaction L-seryl-[protein] + ATP = 3-O-(5'-adenylyl)-L-seryl-[protein] + diphosphate. The catalysed reaction is L-threonyl-[protein] + ATP = 3-O-(5'-adenylyl)-L-threonyl-[protein] + diphosphate. The enzyme catalyses L-tyrosyl-[protein] + ATP = O-(5'-adenylyl)-L-tyrosyl-[protein] + diphosphate. It carries out the reaction L-histidyl-[protein] + UTP = N(tele)-(5'-uridylyl)-L-histidyl-[protein] + diphosphate. It catalyses the reaction L-seryl-[protein] + UTP = O-(5'-uridylyl)-L-seryl-[protein] + diphosphate. The catalysed reaction is L-tyrosyl-[protein] + UTP = O-(5'-uridylyl)-L-tyrosyl-[protein] + diphosphate. Its function is as follows. Nucleotidyltransferase involved in the post-translational modification of proteins. It can catalyze the addition of adenosine monophosphate (AMP) or uridine monophosphate (UMP) to a protein, resulting in modifications known as AMPylation and UMPylation. This chain is Protein nucleotidyltransferase YdiU, found in Salmonella heidelberg (strain SL476).